We begin with the raw amino-acid sequence, 244 residues long: MIRTDAKDGALVLFSGGQDSATCVAWALERYQTVETLGFDYGQRHRVELECREGVREALKHRFPAWSDRLGDDHMIDLSVLGAISDTAMTRTIEIETTANGLPNTFVPGRNLMFMTIAAAIAYRRGLRVLVGGMCETDFSGYPDCRDDTMKALQVALNLGMDTRMVLETPLMWLDKAQTWQLAEQLGGEALVELIRVETHTCYVGERAELHDWGFGCGECPACKLRKRGYEAYLKGERVTEAPL.

ATP is bound at residue 14 to 24 (FSGGQDSATCV). Residues Cys202, Cys217, Cys220, and Cys223 each contribute to the Zn(2+) site.

This sequence belongs to the QueC family. It depends on Zn(2+) as a cofactor.

It carries out the reaction 7-carboxy-7-deazaguanine + NH4(+) + ATP = 7-cyano-7-deazaguanine + ADP + phosphate + H2O + H(+). It participates in purine metabolism; 7-cyano-7-deazaguanine biosynthesis. Functionally, catalyzes the ATP-dependent conversion of 7-carboxy-7-deazaguanine (CDG) to 7-cyano-7-deazaguanine (preQ(0)). This Burkholderia cenocepacia (strain HI2424) protein is 7-cyano-7-deazaguanine synthase.